Consider the following 1226-residue polypeptide: AF4/FMR2 family member 3 (1226 aa).

Over residues 24–37 the composition is skewed to basic and acidic residues; the sequence is RNALRRKERERRNQ. 5 disordered regions span residues 24-65, 116-164, 197-299, 323-496, and 523-728; these read RNAL…GDEL, SRAQ…RATQ, ERPP…GETN, KVEP…SNQY, and IKST…SINA. The segment covering 42–52 has biased composition (polar residues); the sequence is DDGTFNSSYSL. Residues 123 to 132 show a composition bias toward low complexity; the sequence is SSICSTTTST. Composition is skewed to polar residues over residues 251–261 and 334–344; these read LKSSSETSVHC and KDSQLVSSGHN. Residues 381–392 are compositionally biased toward low complexity; the sequence is QQAAQRTALRAL. Residues 396–408 show a composition bias toward polar residues; the sequence is AVVQQPNCRTSVP. A compositionally biased stretch (low complexity) spans 409-445; that stretch reads SSKGSSSSSSSGSSSSSSDSESSSGSDSETESSSSES. The segment covering 485–496 has biased composition (polar residues); sequence QNESHGSESNQY. Residues 523 to 533 show a composition bias toward basic and acidic residues; sequence IKSTCKEEQRP. Composition is skewed to low complexity over residues 550 to 561 and 569 to 579; these read PPAAVAVAVSAA and CAPAENAPAPA. Residues 589–607 are compositionally biased toward basic and acidic residues; the sequence is RRTERTSAGDGANCHRPEE. Residues 668-678 are compositionally biased toward low complexity; that stretch reads TESSSSSSSSD. Polar residues predominate over residues 692 to 705; it reads KAQTVAASASSGND. Ser-755 carries the phosphoserine modification. Disordered stretches follow at residues 783 to 856, 879 to 964, and 1100 to 1138; these read PQEP…LSAN, PISP…RDCK, and AAQA…SLSN. Residues 830-842 show a composition bias toward basic and acidic residues; it reads REIKKSQGEKDSS. Polar residues predominate over residues 843-856; sequence SRLATSTSNTLSAN. Residue Ser-881 is modified to Phosphoserine. A compositionally biased stretch (polar residues) spans 894–909; it reads EDLTSSSRPNGNSLFT.

It belongs to the AF4 family. In terms of tissue distribution, preferentially expressed in lymphoid tissues, highest levels being found in the thymus.

The protein resides in the nucleus. Putative transcription activator that may function in lymphoid development and oncogenesis. Binds, in vitro, to double-stranded DNA. This Homo sapiens (Human) protein is AF4/FMR2 family member 3.